Here is a 408-residue protein sequence, read N- to C-terminus: Glutamate N-acetyltransferase (408 aa).

Residues Thr-150, Lys-176, Thr-189, Glu-271, Asn-403, and Thr-408 each coordinate substrate. Thr-189 acts as the Nucleophile in catalysis.

This sequence belongs to the ArgJ family. Heterotetramer of two alpha and two beta chains.

It localises to the cytoplasm. The catalysed reaction is N(2)-acetyl-L-ornithine + L-glutamate = N-acetyl-L-glutamate + L-ornithine. The protein operates within amino-acid biosynthesis; L-arginine biosynthesis; L-ornithine and N-acetyl-L-glutamate from L-glutamate and N(2)-acetyl-L-ornithine (cyclic): step 1/1. Catalyzes the transfer of the acetyl group from N(2)-acetylornithine to glutamate, forming N-acetylglutamate and L-ornithine. This chain is Glutamate N-acetyltransferase, found in Methanococcus vannielii (strain ATCC 35089 / DSM 1224 / JCM 13029 / OCM 148 / SB).